We begin with the raw amino-acid sequence, 458 residues long: Glutamyl-tRNA(Gln) amidotransferase subunit D (458 aa).

An Asparaginase/glutaminase domain is found at 97–434 (PNVSVMSTGG…KEVERLMRTN (338 aa)). Active-site residues include Thr107, Thr185, Asp186, and Lys264.

The protein belongs to the asparaginase 1 family. GatD subfamily. As to quaternary structure, heterodimer of GatD and GatE.

It carries out the reaction L-glutamyl-tRNA(Gln) + L-glutamine + ATP + H2O = L-glutaminyl-tRNA(Gln) + L-glutamate + ADP + phosphate + H(+). Functionally, allows the formation of correctly charged Gln-tRNA(Gln) through the transamidation of misacylated Glu-tRNA(Gln) in organisms which lack glutaminyl-tRNA synthetase. The reaction takes place in the presence of glutamine and ATP through an activated gamma-phospho-Glu-tRNA(Gln). The GatDE system is specific for glutamate and does not act on aspartate. The sequence is that of Glutamyl-tRNA(Gln) amidotransferase subunit D from Methanopyrus kandleri (strain AV19 / DSM 6324 / JCM 9639 / NBRC 100938).